A 133-amino-acid polypeptide reads, in one-letter code: Phosphoribosyl-AMP cyclohydrolase (133 aa).

Mg(2+) is bound at residue Asp-77. A Zn(2+)-binding site is contributed by Cys-78. Mg(2+) is bound by residues Asp-79 and Asp-81. Residues Cys-95 and Cys-102 each coordinate Zn(2+).

The protein belongs to the PRA-CH family. Homodimer. It depends on Mg(2+) as a cofactor. Requires Zn(2+) as cofactor.

Its subcellular location is the cytoplasm. The catalysed reaction is 1-(5-phospho-beta-D-ribosyl)-5'-AMP + H2O = 1-(5-phospho-beta-D-ribosyl)-5-[(5-phospho-beta-D-ribosylamino)methylideneamino]imidazole-4-carboxamide. It functions in the pathway amino-acid biosynthesis; L-histidine biosynthesis; L-histidine from 5-phospho-alpha-D-ribose 1-diphosphate: step 3/9. Its function is as follows. Catalyzes the hydrolysis of the adenine ring of phosphoribosyl-AMP. The polypeptide is Phosphoribosyl-AMP cyclohydrolase (Azotobacter chroococcum mcd 1).